The chain runs to 459 residues: Cysteine--tRNA ligase (459 aa).

C28 contacts Zn(2+). Positions 30 to 40 (ITIYDLCHIGH) match the 'HIGH' region motif. Residues C209, H234, and E238 each coordinate Zn(2+). The 'KMSKS' region motif lies at 266 to 270 (KMSKS). K269 is a binding site for ATP.

Belongs to the class-I aminoacyl-tRNA synthetase family. Monomer. Requires Zn(2+) as cofactor.

Its subcellular location is the cytoplasm. The catalysed reaction is tRNA(Cys) + L-cysteine + ATP = L-cysteinyl-tRNA(Cys) + AMP + diphosphate. The protein is Cysteine--tRNA ligase of Shewanella sediminis (strain HAW-EB3).